Here is a 348-residue protein sequence, read N- to C-terminus: RNA 3'-terminal phosphate cyclase (348 aa).

Residues Q102 and 285–288 (HMGD) contribute to the ATP site. H311 acts as the Tele-AMP-histidine intermediate in catalysis.

Belongs to the RNA 3'-terminal cyclase family. Type 1 subfamily.

Its subcellular location is the cytoplasm. The enzyme catalyses a 3'-end 3'-phospho-ribonucleotide-RNA + ATP = a 3'-end 2',3'-cyclophospho-ribonucleotide-RNA + AMP + diphosphate. Catalyzes the conversion of 3'-phosphate to a 2',3'-cyclic phosphodiester at the end of RNA. The mechanism of action of the enzyme occurs in 3 steps: (A) adenylation of the enzyme by ATP; (B) transfer of adenylate to an RNA-N3'P to produce RNA-N3'PP5'A; (C) and attack of the adjacent 2'-hydroxyl on the 3'-phosphorus in the diester linkage to produce the cyclic end product. The biological role of this enzyme is unknown but it is likely to function in some aspects of cellular RNA processing. The protein is RNA 3'-terminal phosphate cyclase of Korarchaeum cryptofilum (strain OPF8).